A 342-amino-acid chain; its full sequence is MEPNNSFRVDSEFRYTLFPIFYSIVFVLGVIANSYVLWVFARLYPSKKFNEIKIFMVNLTMADLLFLVTLPLWIVYYYNQGDWILPKFLCNLAGCFFFINTYCSVAFLAVITYNRFQAVTRPIKTAQATTRKRGILLSLIIWVSIVGAASYFFVLDSTNREPNKTGSANITRCFEHYEKGSIPVLTIHIFLVFSFFLVFLIILFCNLVIIRTLLTQQVQIQRNAEVKRRALWMVCTVLAVFIICFVPHHLVQLPWTLAELGFQDTDFHQAINDAHQVTLCLLSTNCVLDPIIYCFLTKKFRKHLTEKLYSMRESRKCSRATSETGTEVVMQLKDVPVKSLKY.

The Extracellular portion of the chain corresponds to 1-16; that stretch reads MEPNNSFRVDSEFRYT. N4 carries an N-linked (GlcNAc...) asparagine glycan. The chain crosses the membrane as a helical span at residues 17 to 38; sequence LFPIFYSIVFVLGVIANSYVLW. The Cytoplasmic portion of the chain corresponds to 39 to 54; sequence VFARLYPSKKFNEIKI. A helical membrane pass occupies residues 55–74; it reads FMVNLTMADLLFLVTLPLWI. The Extracellular portion of the chain corresponds to 75-91; sequence VYYYNQGDWILPKFLCN. The cysteines at positions 90 and 173 are disulfide-linked. A helical transmembrane segment spans residues 92 to 113; the sequence is LAGCFFFINTYCSVAFLAVITY. The Cytoplasmic segment spans residues 114–133; that stretch reads NRFQAVTRPIKTAQATTRKR. Residues 134–155 form a helical membrane-spanning segment; sequence GILLSLIIWVSIVGAASYFFVL. Over 156–184 the chain is Extracellular; that stretch reads DSTNREPNKTGSANITRCFEHYEKGSIPV. 2 N-linked (GlcNAc...) asparagine glycosylation sites follow: N163 and N169. Residues 185–205 traverse the membrane as a helical segment; sequence LTIHIFLVFSFFLVFLIILFC. The Cytoplasmic segment spans residues 206-233; that stretch reads NLVIIRTLLTQQVQIQRNAEVKRRALWM. A helical membrane pass occupies residues 234-254; it reads VCTVLAVFIICFVPHHLVQLP. Residues 255–276 are Extracellular-facing; the sequence is WTLAELGFQDTDFHQAINDAHQ. A helical transmembrane segment spans residues 277-296; sequence VTLCLLSTNCVLDPIIYCFL. Residues 297-342 are Cytoplasmic-facing; that stretch reads TKKFRKHLTEKLYSMRESRKCSRATSETGTEVVMQLKDVPVKSLKY.

It belongs to the G-protein coupled receptor 1 family. As to quaternary structure, interacts with ARRB1. As to expression, found in oviductal epithelial and stroma cells. Levels in the oviduct are raised at days 2-4 of both pregnancy and of the estrus cycle. In the endometrium, localization is predominantly to the apical borders of glandular and luminal epithelial cells. Expressed at lower levels in endometrial stromal cells. Levels in the endometrium are increased at day 20 of pregnancy (at protein level).

It localises to the cell membrane. Functionally, receptor for platelet activating factor, a chemotactic phospholipid mediator that possesses potent inflammatory, smooth-muscle contractile and hypotensive activity. Seems to mediate its action via a G protein that activates a phosphatidylinositol-calcium second messenger system. May be involved in the morphological and physical modifications of the oviduct and uterus during the estrus cycle and early pregnancy. The chain is Platelet-activating factor receptor from Bos taurus (Bovine).